Consider the following 354-residue polypeptide: UDP-3-O-acylglucosamine N-acyltransferase (354 aa).

Catalysis depends on H258, which acts as the Proton acceptor.

The protein belongs to the transferase hexapeptide repeat family. LpxD subfamily. In terms of assembly, homotrimer.

The catalysed reaction is a UDP-3-O-[(3R)-3-hydroxyacyl]-alpha-D-glucosamine + a (3R)-hydroxyacyl-[ACP] = a UDP-2-N,3-O-bis[(3R)-3-hydroxyacyl]-alpha-D-glucosamine + holo-[ACP] + H(+). The protein operates within bacterial outer membrane biogenesis; LPS lipid A biosynthesis. Functionally, catalyzes the N-acylation of UDP-3-O-acylglucosamine using 3-hydroxyacyl-ACP as the acyl donor. Is involved in the biosynthesis of lipid A, a phosphorylated glycolipid that anchors the lipopolysaccharide to the outer membrane of the cell. This Rhizobium meliloti (strain 1021) (Ensifer meliloti) protein is UDP-3-O-acylglucosamine N-acyltransferase.